The primary structure comprises 573 residues: DNA damage-binding protein CMR1 (573 aa).

The segment at 27 to 94 (DSLNDSISRE…EMEKAEERKR (68 aa)) is disordered. Positions 72 to 152 (TMEDSEEDKQ…EEIKKEEDST (81 aa)) form a coiled coil. Positions 79–94 (DKQMREEMEKAEERKR) are enriched in basic and acidic residues. WD repeat units follow at residues 218 to 259 (ITQQ…DDET), 268 to 308 (PHGK…STEV), 319 to 357 (DYPL…KQGE), 361 to 401 (LHDK…QKNS), 418 to 456 (HSRL…KLPL), 495 to 538 (GRWV…LCHL), and 542 to 573 (DRMT…YLFE).

The protein belongs to the WD repeat DDB2/WDR76 family.

Functionally, DNA-binding protein that binds to both single- and double-stranded DNA. Binds preferentially to UV-damaged DNA. May be involved in DNA-metabolic processes. In Meyerozyma guilliermondii (strain ATCC 6260 / CBS 566 / DSM 6381 / JCM 1539 / NBRC 10279 / NRRL Y-324) (Yeast), this protein is DNA damage-binding protein CMR1.